Reading from the N-terminus, the 147-residue chain is Hemoglobin subunit beta-2 (147 aa).

The Globin domain occupies 3 to 147; it reads EWTDSERAII…VVSALGRQYH (145 aa). Heme b contacts are provided by histidine 64 and histidine 93.

Belongs to the globin family. As to quaternary structure, hb 3 is a heterotetramer of two alpha-2 and two beta-2 chains. In terms of tissue distribution, red blood cells.

Its function is as follows. Involved in oxygen transport from gills to the various peripheral tissues. The sequence is that of Hemoglobin subunit beta-2 (hbb2) from Arctogadus glacialis (Arctic cod).